Reading from the N-terminus, the 951-residue chain is Glycine dehydrogenase (decarboxylating) 1 (951 aa).

Lysine 703 is subject to N6-(pyridoxal phosphate)lysine.

It belongs to the GcvP family. In terms of assembly, the glycine cleavage system is composed of four proteins: P, T, L and H. The cofactor is pyridoxal 5'-phosphate.

It catalyses the reaction N(6)-[(R)-lipoyl]-L-lysyl-[glycine-cleavage complex H protein] + glycine + H(+) = N(6)-[(R)-S(8)-aminomethyldihydrolipoyl]-L-lysyl-[glycine-cleavage complex H protein] + CO2. Its function is as follows. The glycine cleavage system catalyzes the degradation of glycine. The P protein binds the alpha-amino group of glycine through its pyridoxal phosphate cofactor; CO(2) is released and the remaining methylamine moiety is then transferred to the lipoamide cofactor of the H protein. The chain is Glycine dehydrogenase (decarboxylating) 1 (gcvP1) from Pseudomonas putida (strain ATCC 47054 / DSM 6125 / CFBP 8728 / NCIMB 11950 / KT2440).